We begin with the raw amino-acid sequence, 282 residues long: Pantothenate synthetase (282 aa).

30 to 37 (MGALHRGH) is a binding site for ATP. His37 (proton donor) is an active-site residue. Position 61 (Gln61) interacts with (R)-pantoate. Gln61 serves as a coordination point for beta-alanine. An ATP-binding site is contributed by 147–150 (GEKD). Gln153 contacts (R)-pantoate. Residue 184–187 (LSSR) coordinates ATP.

Belongs to the pantothenate synthetase family. Homodimer.

Its subcellular location is the cytoplasm. The enzyme catalyses (R)-pantoate + beta-alanine + ATP = (R)-pantothenate + AMP + diphosphate + H(+). It functions in the pathway cofactor biosynthesis; (R)-pantothenate biosynthesis; (R)-pantothenate from (R)-pantoate and beta-alanine: step 1/1. Its function is as follows. Catalyzes the condensation of pantoate with beta-alanine in an ATP-dependent reaction via a pantoyl-adenylate intermediate. The protein is Pantothenate synthetase of Rhizorhabdus wittichii (strain DSM 6014 / CCUG 31198 / JCM 15750 / NBRC 105917 / EY 4224 / RW1) (Sphingomonas wittichii).